We begin with the raw amino-acid sequence, 77 residues long: Defensin-like protein 161 (77 aa).

Positions 1 to 27 (MAKLSCSYLLVFMLVFSAILMVEKVEG) are cleaved as a signal peptide. Intrachain disulfides connect Cys30–Cys77, Cys40–Cys59, Cys45–Cys71, and Cys49–Cys73.

It belongs to the DEFL family.

The protein resides in the secreted. The protein is Defensin-like protein 161 (LCR27) of Arabidopsis thaliana (Mouse-ear cress).